The chain runs to 253 residues: Tetraspanin-11 (253 aa).

3 consecutive transmembrane segments (helical) span residues 19–39, 63–83, and 93–113; these read LLFVFNFFFWVGGAAVLAVGI, ILIFAGVLVMVTGFLGFGAIL, and YFCLLLVIFLVELVAGVLAHV. N127 carries an N-linked (GlcNAc...) asparagine glycan. The chain crosses the membrane as a helical span at residues 220–240; sequence LLLMGAVGIGVACLQICGMVL.

This sequence belongs to the tetraspanin (TM4SF) family.

It is found in the membrane. This Homo sapiens (Human) protein is Tetraspanin-11 (TSPAN11).